We begin with the raw amino-acid sequence, 396 residues long: Maltose/maltodextrin-binding periplasmic protein (396 aa).

The signal sequence occupies residues M1–A26.

This sequence belongs to the bacterial solute-binding protein 1 family. The complex is composed of two ATP-binding proteins (MalK), two transmembrane proteins (MalG and MalF) and a solute-binding protein (MalE).

It is found in the periplasm. Functionally, part of the ABC transporter complex MalEFGK involved in maltose/maltodextrin import. Binds maltose and higher maltodextrins. This chain is Maltose/maltodextrin-binding periplasmic protein (malE), found in Salmonella typhimurium (strain LT2 / SGSC1412 / ATCC 700720).